A 330-amino-acid polypeptide reads, in one-letter code: Polyprenyl transferase dpfgC (330 aa).

N-linked (GlcNAc...) asparagine glycosylation occurs at N34. The next 7 membrane-spanning stretches (helical) occupy residues 105–125 (ALCV…NDWI), 146–166 (VTTT…WGVL), 175–192 (VLKH…YPFG), 199–219 (KLMI…AIPG), 237–257 (CLPL…AYSY), 273–293 (NIAG…IILA), and 310–330 (NFIL…LTSA).

This sequence belongs to the UbiA prenyltransferase family. Mg(2+) is required as a cofactor.

It localises to the membrane. Its pathway is secondary metabolite biosynthesis; terpenoid biosynthesis. Functionally, polyprenyl transferase; part of the gene cluster that mediates the biosynthesis of diterpenoid pyrones. The first step of the pathway is the synthesis of the alpha-pyrone moiety by the polyketide synthase dpfgA via condensation of one acetyl-CoA starter unit with 3 malonyl-CoA units and 2 methylations. The alpha-pyrone is then combined with geranylgeranyl pyrophosphate (GGPP) formed by the GGPP synthase dpfgD through the action of the prenyltransferase dpfgC to yield a linear alpha-pyrone diterpenoid. Subsequent steps in the diterpenoid pyrone biosynthetic pathway involve the decalin core formation, which is initiated by the epoxidation of the C10-C11 olefin by the FAD-dependent oxidoreductase dpfgE, and is followed by a cyclization cascade catalyzed by the terpene cyclase dpfgB. The short chain dehydrogenase/reductase dpfgG then oxidizes the 8S hydroxy group to a ketone and the short chain dehydrogenase/reductase dpfgH reduces the ketone to the 8R hydroxy group to yield higginsianin B. Higginsianin B is further methylated by the methyltransferase dpfgI to produce the intermediate named FDDP B. The cytochrome P450 monooxygenase dfgpJ then catalyzes a three-step oxidation at C-27 to generate a carboxylic acid as well as C-26 hydroxylation. Finally, methyltransferase dpfgK methylates the carboxylic acid generated by dpfgJ, yielding the final diterpenoid pyrones from the pathway which were named FDDP D and FDDP E. This chain is Polyprenyl transferase dpfgC, found in Gibberella zeae (strain ATCC MYA-4620 / CBS 123657 / FGSC 9075 / NRRL 31084 / PH-1) (Wheat head blight fungus).